Here is a 189-residue protein sequence, read N- to C-terminus: Apolipoprotein D (189 aa).

Residues 1-20 (MVPVLLLLPALAGLFGAAEG) form the signal peptide. A Pyrrolidone carboxylic acid modification is found at Gln-21. 2 disulfides stabilise this stretch: Cys-28-Cys-134 and Cys-61-Cys-185. Asn-65 and Asn-98 each carry an N-linked (GlcNAc...) asparagine glycan.

The protein belongs to the calycin superfamily. Lipocalin family. In terms of assembly, homodimer.

Its subcellular location is the secreted. In terms of biological role, APOD occurs in the macromolecular complex with lecithin-transport and binding of bilin. Appears to be able to transport a variety of ligands in a number of different contexts. The sequence is that of Apolipoprotein D (APOD) from Bos taurus (Bovine).